The chain runs to 144 residues: NADH dehydrogenase [ubiquinone] 1 alpha subcomplex subunit 13 (144 aa).

An N-acetylalanine modification is found at Ala2. Residues 30–51 traverse the membrane as a helical segment; that stretch reads LSGYSMFAVGIGALLFGYWSMM.

In terms of assembly, complex I is composed of 45 different subunits. Interacts with CARD15, but not with CARD4. Interacts with STAT3, but not with STAT1, STAT2 and STAT5A. Interacts with OLFM4.

The protein localises to the mitochondrion inner membrane. The protein resides in the nucleus. Accessory subunit of the mitochondrial membrane respiratory chain NADH dehydrogenase (Complex I), that is believed not to be involved in catalysis. Complex I functions in the transfer of electrons from NADH to the respiratory chain. The immediate electron acceptor for the enzyme is believed to be ubiquinone. Involved in the interferon/all-trans-retinoic acid (IFN/RA) induced cell death. This apoptotic activity is inhibited by interaction with viral IRF1. Prevents the transactivation of STAT3 target genes. May play a role in CARD15-mediated innate mucosal responses and serve to regulate intestinal epithelial cell responses to microbes. This is NADH dehydrogenase [ubiquinone] 1 alpha subcomplex subunit 13 (NDUFA13) from Bos taurus (Bovine).